The chain runs to 309 residues: Zinc transporter ZIPB (309 aa).

Over 1-22 the chain is Periplasmic; sequence MNQPSSLAADLRGAWHAQAQSH. The helical transmembrane segment at 23–50 threads the bilayer; sequence PLITLGLAASAAGVVLLLVAGIVNALTG. The Extracellular segment spans residues 51–55; sequence ENRVH. Residues 56-81 traverse the membrane as a helical segment; the sequence is VGYAVLGGAAGFAATALGALMALGLR. The Periplasmic segment spans residues 82–83; that stretch reads AI. A helical membrane pass occupies residues 84–119; the sequence is SARTQDAMLGFAAGMMLAASAFSLILPGLDAAGTIV. Asp89 is a binding site for Zn(2+). Met99 is a Cd(2+) binding site. Residues 120–121 lie on the Extracellular side of the membrane; it reads GP. A helical membrane pass occupies residues 122-145; the sequence is GPAAAAVVALGLGLGVLLMLGLDY. Residue Asp144 participates in Zn(2+) binding. Asp144 contributes to the Cd(2+) binding site. At 146-165 the chain is on the periplasmic side; it reads FTPHEHERTGHQGPEAARVN. Residues 166-190 traverse the membrane as a helical segment; the sequence is RVWLFVLTIILHNLPEGMAIGVSFA. A Zn(2+)-binding site is contributed by His177. The Cd(2+) site is built by His177, Asn178, and Glu181. Residue Glu181 participates in Zn(2+) binding. Topologically, residues 191-192 are extracellular; sequence TG. A helical membrane pass occupies residues 193-222; that stretch reads DLRIGLPLTSAIAIQDVPEGLAVALALRAV. Gln207 lines the Zn(2+) pocket. Cd(2+) contacts are provided by Gln207, Asp208, and Glu211. Glu211 is a Zn(2+) binding site. The Periplasmic segment spans residues 223-224; that stretch reads GL. The helical transmembrane segment at 225 to 251 threads the bilayer; it reads PIGRAVLVAVASGLMEPLGALVGVGIS. Residue Glu240 coordinates Cd(2+). Residues 252 to 255 are Extracellular-facing; the sequence is SGFA. The chain crosses the membrane as a helical span at residues 256-275; sequence LAYPISMGLAAGAMIFVVSH. Positions 275, 276, and 286 each coordinate Zn(2+). Cd(2+) is bound at residue His275. Topologically, residues 276 to 287 are periplasmic; that stretch reads EVIPETHRNGHE. The chain crosses the membrane as a helical span at residues 288–308; sequence TTATVGLMAGFALMMFLDTAL. Position 309 (Gly309) is a topological domain, extracellular.

Belongs to the ZIP transporter (TC 2.A.5) family. In terms of assembly, homodimer. Also exists as a monomer.

Its subcellular location is the cell inner membrane. The catalysed reaction is Zn(2+)(in) = Zn(2+)(out). The enzyme catalyses Cd(2+)(in) = Cd(2+)(out). In terms of biological role, selective electrodiffusional channel that mediates the uptake of Zn(2+). Exploits in vivo zinc concentration gradients (maintained by cellular zinc homeostasis) to passively move zinc ions into the cytoplasm. ZIPB-mediated zinc flux is dependent upon pH, but independent of the proton motive force. Is also able to import Cd(2+), but is not permeable to Co(2+), Cu(2+), Fe(2+), Mn(2+) and Ni(2+). In Bordetella bronchiseptica (strain ATCC BAA-588 / NCTC 13252 / RB50) (Alcaligenes bronchisepticus), this protein is Zinc transporter ZIPB.